Here is a 687-residue protein sequence, read N- to C-terminus: POZ (BTB) and AT hook-containing zinc finger 1 (687 aa).

In terms of domain architecture, BTB spans 41–130 (CDVLLRVGDE…AYTSRIVVRL (90 aa)). Polar residues predominate over residues 250-260 (PFPNVASSAPP). The tract at residues 250–279 (PFPNVASSAPPLTSKRGRGRPRKANLLDSM) is disordered. Residues 292-314 (LPCGLCGKVFTDANRLRQHEAQH) form a C2H2-type 1 zinc finger. Positions 332-351 (GENGLPISEDPDGPRKRSRT) are disordered. 5 consecutive C2H2-type zinc fingers follow at residues 355 to 377 (VACE…KLSH), 383 to 405 (YSCP…VRSH), 413 to 436 (YICQ…KQVH), 442 to 464 (HKCQ…LACH), and 495 to 517 (NFCS…VKTH). Residues 564 to 587 (SYGDLSDASDLKTPEKQSANGSFS) form a disordered region. The C2H2-type 7 zinc finger occupies 605–628 (YPCPECGSFFRSKSYLNKHIQKVH).

Homodimer. Interacts with RNF4. Interacts (via C-terminus) with TP53; this interaction inhibits TP53 ability to activate transcription. In terms of tissue distribution, widely expressed at high levels during embryogenesis, especially in the central nervous system, especially to the actively proliferating neuroblasts in the periventricular neocortical neuroepithelium, in the telencephalic cortical plate and in the hippocampus. Also expressed in a stage-specific manner in the mouse germinal epithelium. While strongly expressed during brain development,m its expression turns down in adult brain.

It localises to the nucleus. Functionally, transcriptional regulator that plays a role in many biological processes such as embryogenesis, senescence, T-cell development or neurogenesis. Interacts with the TP53 protein to control genes that are important in proliferation and in the DNA-damage response. Mechanistically, the interaction inhibits the DNA binding and transcriptional activity of TP53/p53. Part of the transcriptional network modulating regulatory T-cell development and controls the generation of the regulatory T-cell pool under homeostatic conditions. In Mus musculus (Mouse), this protein is POZ (BTB) and AT hook-containing zinc finger 1.